Reading from the N-terminus, the 66-residue chain is Small ribosomal subunit protein eS27 (66 aa).

Cys-21, Cys-24, Cys-40, and Cys-43 together coordinate Zn(2+). The C4-type zinc-finger motif lies at 21-43; that stretch reads CRQCNNEQVIFSNATFPVRCLSC.

The protein belongs to the eukaryotic ribosomal protein eS27 family. In terms of assembly, part of the 30S ribosomal subunit. Zn(2+) serves as cofactor.

The chain is Small ribosomal subunit protein eS27 from Sulfolobus acidocaldarius (strain ATCC 33909 / DSM 639 / JCM 8929 / NBRC 15157 / NCIMB 11770).